The following is a 344-amino-acid chain: Dihydroorotate dehydrogenase (quinone) (344 aa).

FMN contacts are provided by residues Ala-65–Lys-69 and Thr-89. Lys-69 is a substrate binding site. Asn-114–Phe-118 is a substrate binding site. FMN-binding residues include Asn-145 and Asn-178. Asn-178 is a binding site for substrate. Ser-181 (nucleophile) is an active-site residue. Position 183 (Asn-183) interacts with substrate. FMN-binding residues include Lys-223 and Thr-251. Asn-252–Thr-253 contributes to the substrate binding site. FMN-binding positions include Gly-274, Gly-303, and Tyr-324–Ser-325.

This sequence belongs to the dihydroorotate dehydrogenase family. Type 2 subfamily. As to quaternary structure, monomer. FMN is required as a cofactor.

It localises to the cell membrane. It carries out the reaction (S)-dihydroorotate + a quinone = orotate + a quinol. It participates in pyrimidine metabolism; UMP biosynthesis via de novo pathway; orotate from (S)-dihydroorotate (quinone route): step 1/1. Catalyzes the conversion of dihydroorotate to orotate with quinone as electron acceptor. The polypeptide is Dihydroorotate dehydrogenase (quinone) (Cupriavidus pinatubonensis (strain JMP 134 / LMG 1197) (Cupriavidus necator (strain JMP 134))).